The primary structure comprises 221 residues: NAD(P)H-hydrate epimerase (221 aa).

The 201-residue stretch at 10–210 folds into the YjeF N-terminal domain; it reads MQQIDNYTIE…DVGMLIPDDF (201 aa). (6S)-NADPHX is bound at residue 58–62; it reads NNGAD. Positions 59 and 120 each coordinate K(+). (6S)-NADPHX contacts are provided by residues 124–130 and aspartate 153; that span reads GVGLNNV. Threonine 156 serves as a coordination point for K(+).

This sequence belongs to the NnrE/AIBP family. Requires K(+) as cofactor.

It catalyses the reaction (6R)-NADHX = (6S)-NADHX. It carries out the reaction (6R)-NADPHX = (6S)-NADPHX. Its function is as follows. Catalyzes the epimerization of the S- and R-forms of NAD(P)HX, a damaged form of NAD(P)H that is a result of enzymatic or heat-dependent hydration. This is a prerequisite for the S-specific NAD(P)H-hydrate dehydratase to allow the repair of both epimers of NAD(P)HX. In Leuconostoc mesenteroides subsp. mesenteroides (strain ATCC 8293 / DSM 20343 / BCRC 11652 / CCM 1803 / JCM 6124 / NCDO 523 / NBRC 100496 / NCIMB 8023 / NCTC 12954 / NRRL B-1118 / 37Y), this protein is NAD(P)H-hydrate epimerase.